Here is a 277-residue protein sequence, read N- to C-terminus: Shikimate dehydrogenase (NADP(+)) (277 aa).

Shikimate-binding positions include 14-16 (SKS) and Thr-61. The active-site Proton acceptor is Lys-65. NADP(+) is bound at residue Asp-77. Shikimate-binding residues include Asn-86 and Asp-102. NADP(+) contacts are provided by residues 127–131 (GAGGA), 151–156 (NRTPDK), and Met-215. Tyr-217 contributes to the shikimate binding site. Gly-239 contributes to the NADP(+) binding site.

The protein belongs to the shikimate dehydrogenase family. In terms of assembly, homodimer.

The enzyme catalyses shikimate + NADP(+) = 3-dehydroshikimate + NADPH + H(+). Its pathway is metabolic intermediate biosynthesis; chorismate biosynthesis; chorismate from D-erythrose 4-phosphate and phosphoenolpyruvate: step 4/7. Its function is as follows. Involved in the biosynthesis of the chorismate, which leads to the biosynthesis of aromatic amino acids. Catalyzes the reversible NADPH linked reduction of 3-dehydroshikimate (DHSA) to yield shikimate (SA). The chain is Shikimate dehydrogenase (NADP(+)) from Nitrosomonas eutropha (strain DSM 101675 / C91 / Nm57).